Here is a 150-residue protein sequence, read N- to C-terminus: Leukotriene C4 synthase (150 aa).

At 1–6 (MKDEVA) the chain is on the cytoplasmic side. A helical transmembrane segment spans residues 7 to 27 (LLASVTLLGVLLQAYFSLQVI). Residues 28 to 48 (SARRAFRVSPPLTTGPPEFER) lie on the Lumenal side of the membrane. Position 30 (Arg-30) interacts with glutathione. Catalysis depends on Arg-31, which acts as the Proton donor. Position 36 is a phosphoserine (Ser-36). The chain crosses the membrane as a helical span at residues 49-69 (IYRAQVNCSEYFPLFLAMLWV). Glutathione contacts are provided by residues 51-55 (RAQVN) and 58-59 (EY). Over 70 to 73 (AGIF) the chain is Cytoplasmic. The chain crosses the membrane as a helical span at residues 74–94 (FHEGAAALCGLVYLFARLRYF). 93 to 97 (YFQGY) contacts glutathione. Residues 95–104 (QGYARSAQQR) lie on the Lumenal side of the membrane. The active-site Proton acceptor is Arg-104. Residues 105–124 (LAPLYASARALWLLVALAAL) form a helical membrane-spanning segment. The Cytoplasmic portion of the chain corresponds to 125–150 (GLLAHFLPAELRAALLGQLRKLLLRS).

This sequence belongs to the MAPEG family. In terms of assembly, homotrimer. Interacts with ALOX5AP and ALOX5. Post-translationally, phosphorylation at Ser-36 by RPS6KB1 inhibits the leukotriene-C4 synthase activity.

The protein resides in the nucleus outer membrane. Its subcellular location is the endoplasmic reticulum membrane. The protein localises to the nucleus membrane. It catalyses the reaction leukotriene C4 = leukotriene A4 + glutathione. It carries out the reaction (13S,14S)-epoxy-(4Z,7Z,9E,11E,16Z,19Z)-docosahexaenoate + glutathione = (13R)-S-glutathionyl-(14S)-hydroxy-(4Z,7Z,9E,11E,16Z,19Z)-docosahexaenoate. Its pathway is lipid metabolism; leukotriene C4 biosynthesis. Its activity is regulated as follows. Inhibited by MK886. Functionally, catalyzes the conjugation of leukotriene A4 with reduced glutathione (GSH) to form leukotriene C4 with high specificity. Can also catalyze the transfer of a glutathionyl group from glutathione (GSH) to 13(S),14(S)-epoxy-docosahexaenoic acid to form maresin conjugate in tissue regeneration 1 (MCTR1), a bioactive lipid mediator that possess potent anti-inflammatory and proresolving actions. This Bos taurus (Bovine) protein is Leukotriene C4 synthase (LTC4S).